The following is a 327-amino-acid chain: Deoxyribonuclease (327 aa).

The or 35 signal peptide spans Met1–Ala24. The disordered stretch occupies residues Asp299–Asn327.

It catalyses the reaction Endonucleolytic cleavage to 5'-phosphodinucleotide and 5'-phosphooligonucleotide end-products.. May have a role in S.equisimilis virulence. In Streptococcus dysgalactiae subsp. equisimilis (Streptococcus equisimilis), this protein is Deoxyribonuclease (sdc).